The sequence spans 1332 residues: Sister chromatid cohesion protein PDS5 homolog A (1332 aa).

Met-1 is subject to N-acetylmethionine. Residues 392-428 (ALVNDQLLGFVRERTLDKRWRVRKEAMMGLAQLYKKY) form an HEAT repeat. Phosphoserine is present on Ser-1096. The interval 1138 to 1332 (GVLGTVNKPL…PAERQIDLQR (195 aa)) is disordered. Lys-1145 is modified (N6-acetyllysine). Residues 1160–1173 (GTETGSNINANSEL) show a composition bias toward polar residues. 2 positions are modified to phosphoserine: Ser-1174 and Ser-1194. Thr-1207 is modified (phosphothreonine). Lys-1210 is modified (N6-acetyllysine). The span at 1222–1232 (SDQSTQGNISS) shows a compositional bias: polar residues. Lys-1288 is modified (N6-acetyllysine). The residue at position 1303 (Ser-1303) is a Phosphoserine. Residues 1316–1332 (DGAKKAVPAERQIDLQR) show a composition bias toward basic and acidic residues.

Belongs to the PDS5 family. Interacts with the cohesin complex. Interacts with WAPL (via FGF motifs) or CDCA5 (via the FGF motif); the interaction is direct, cohesin-dependent and competitive. Interacts with SMC3. Interacts with TP63.

It is found in the nucleus. Its function is as follows. Probable regulator of sister chromatid cohesion in mitosis which may stabilize cohesin complex association with chromatin. May couple sister chromatid cohesion during mitosis to DNA replication. Cohesion ensures that chromosome partitioning is accurate in both meiotic and mitotic cells and plays an important role in DNA repair. The chain is Sister chromatid cohesion protein PDS5 homolog A (Pds5a) from Mus musculus (Mouse).